The following is a 173-amino-acid chain: Thiol-disulfide oxidoreductase ResA (173 aa).

A helical; Signal-anchor for type II membrane protein transmembrane segment spans residues Val10–Phe29. Positions Met35 to Pro173 constitute a Thioredoxin domain. Cys73 and Cys76 form a disulfide bridge.

It belongs to the thioredoxin family. ResA subfamily.

It localises to the cell membrane. It participates in protein modification; cytochrome c assembly. In terms of biological role, thiol-disulfide oxidoreductase which is required in disulfide reduction during c-type cytochrome synthesis. May accept reducing equivalents from CcdA, leading to breakage of disulfide bonds in apocytochrome c; following this reduction heme can be covalently attached. In Bacillus cereus (strain ATCC 10987 / NRS 248), this protein is Thiol-disulfide oxidoreductase ResA.